The chain runs to 760 residues: Xaa-Pro dipeptidyl-peptidase (760 aa).

Catalysis depends on charge relay system residues serine 349, aspartate 469, and histidine 499.

It belongs to the peptidase S15 family. Homodimer.

The protein resides in the cytoplasm. It carries out the reaction Hydrolyzes Xaa-Pro-|- bonds to release unblocked, N-terminal dipeptides from substrates including Ala-Pro-|-p-nitroanilide and (sequentially) Tyr-Pro-|-Phe-Pro-|-Gly-Pro-|-Ile.. In terms of biological role, removes N-terminal dipeptides sequentially from polypeptides having unsubstituted N-termini provided that the penultimate residue is proline. This Streptococcus pyogenes serotype M28 (strain MGAS6180) protein is Xaa-Pro dipeptidyl-peptidase.